Reading from the N-terminus, the 331-residue chain is MEAKELVQRYRNGETLFTGLKLPGINLEAADLIGIVLNEADLRGANLLFCYLNRANLGQANLVAANLSGASLNQADLAGADLRSANFHGAMLQGAILRDSDMTLATLQDTNLIGADLRGADLSGATLTGACLRGANMRQEKKGYYTNLQAAILGRADLQGANMKGVDLSRADLSYANLKEANLRDVDLRKADLSYANLKGALLTDANLSGAKLNGADLQNANLMRAKISEAEMTAVNCQGAIMTHVNLNRTNLTGSNLSFTRMNSADLSRANLTKANLQEAELIEAFFARANLTEANFINANLVRADLMSANMVGADFQGATMPDGQVRHH.

Pentapeptide repeat domains follow at residues 20–59, 60–99, 100–139, 151–190, 191–230, 231–270, and 271–310; these read LKLP…NLGQ, ANLV…ILRD, SDMT…NMRQ, AILG…DLRK, ADLS…KISE, AEMT…DLSR, and ANLT…DLMS.

This is an uncharacterized protein from Synechocystis sp. (strain ATCC 27184 / PCC 6803 / Kazusa).